The sequence spans 775 residues: Tyrosine-protein phosphatase non-receptor type 12 (775 aa).

Methionine 1 bears the N-acetylmethionine mark. Position 19 is a phosphoserine (serine 19). The 266-residue stretch at 28–293 (FARDFMRLRR…ELVHRAIAQL (266 aa)) folds into the Tyrosine-protein phosphatase domain. Residues aspartate 199, 231 to 237 (CSAGCGR), and glutamine 278 each bind substrate. The active-site Phosphocysteine intermediate is cysteine 231. Residues 322–341 (SSIDSEKQDSPPPKPPRTRS) are disordered. Phosphoserine is present on residues serine 331, serine 434, serine 448, and serine 467. The tract at residues 344-437 (VEGDAKEEIL…KLERNLSFEI (94 aa)) is interaction with TGFB1I1. Positions 462–775 (KIKSASSSVV…GPREPPSEWT (314 aa)) are disordered. At threonine 519 the chain carries Phosphothreonine. Phosphoserine occurs at positions 550 and 567. Residues 558–573 (NHSQTLKTVSSTPNST) are compositionally biased toward polar residues. Phosphothreonine is present on threonine 569. Serine 596 is modified (phosphoserine). Threonine 598 carries the phosphothreonine modification. 4 positions are modified to phosphoserine: serine 603, serine 606, serine 608, and serine 613. Residues 622–640 (TSISTASATVSPASSAESA) show a composition bias toward low complexity. Serine 673 carries the phosphoserine modification. Basic and acidic residues predominate over residues 692-711 (VRPEWHELPNQEWSEQRESE). Residue serine 748 is modified to Phosphoserine. The span at 766–775 (GPREPPSEWT) shows a compositional bias: basic and acidic residues.

Belongs to the protein-tyrosine phosphatase family. Non-receptor class 4 subfamily. Interacts with PSTPIP1 and TGFB1I1. Interacts with PTK2B/PYK2. Interacts with LPXN. Interacts with SORBS2; this interaction greatly enhances WASF1 dephosphorylation and might mediate partial translocation to focal adhesion sites. Phosphorylated by STK24/MST3 and this results in inhibition of its activity.

It localises to the cytoplasm. The protein localises to the cell junction. It is found in the focal adhesion. Its subcellular location is the cell projection. The protein resides in the podosome. The enzyme catalyses O-phospho-L-tyrosyl-[protein] + H2O = L-tyrosyl-[protein] + phosphate. Its function is as follows. Dephosphorylates a range of proteins, and thereby regulates cellular signaling cascades. Dephosphorylates cellular tyrosine kinases, such as ERBB2 and PTK2B/PYK2, and thereby regulates signaling via ERBB2 and PTK2B/PYK2. Selectively dephosphorylates ERBB2 phosphorylated at 'Tyr-1112', 'Tyr-1196', and/or 'Tyr-1248'. This is Tyrosine-protein phosphatase non-receptor type 12 (Ptpn12) from Mus musculus (Mouse).